The sequence spans 382 residues: 1-deoxy-D-xylulose 5-phosphate reductoisomerase (382 aa).

NADPH contacts are provided by Thr-10, Gly-11, Ser-12, Ile-13, Gly-36, and Asn-122. Lys-123 is a 1-deoxy-D-xylulose 5-phosphate binding site. Residue Glu-124 coordinates NADPH. Mn(2+) is bound at residue Asp-148. The 1-deoxy-D-xylulose 5-phosphate site is built by Ser-149, Glu-150, Ser-174, and His-197. Glu-150 lines the Mn(2+) pocket. An NADPH-binding site is contributed by Gly-203. 1-deoxy-D-xylulose 5-phosphate contacts are provided by Ser-210, Asn-215, Lys-216, and Glu-219. Glu-219 contributes to the Mn(2+) binding site.

The protein belongs to the DXR family. Mg(2+) is required as a cofactor. Requires Mn(2+) as cofactor.

It catalyses the reaction 2-C-methyl-D-erythritol 4-phosphate + NADP(+) = 1-deoxy-D-xylulose 5-phosphate + NADPH + H(+). It participates in isoprenoid biosynthesis; isopentenyl diphosphate biosynthesis via DXP pathway; isopentenyl diphosphate from 1-deoxy-D-xylulose 5-phosphate: step 1/6. Catalyzes the NADPH-dependent rearrangement and reduction of 1-deoxy-D-xylulose-5-phosphate (DXP) to 2-C-methyl-D-erythritol 4-phosphate (MEP). The polypeptide is 1-deoxy-D-xylulose 5-phosphate reductoisomerase (Chlorobaculum tepidum (strain ATCC 49652 / DSM 12025 / NBRC 103806 / TLS) (Chlorobium tepidum)).